The sequence spans 512 residues: Pantetheinase (512 aa).

Positions 1 to 23 (MGMSWWLACAAAFSALCVLKASS) are cleaved as a signal peptide. Positions 32-308 (YEHAVILPKD…GKLLFAQLKS (277 aa)) constitute a CN hydrolase domain. Residue Glu81 is the Proton acceptor of the active site. N-linked (GlcNAc...) asparagine glycosylation is found at Asn132 and Asn148. The active-site Proton donor is the Lys180. Residue Cys213 is the Nucleophile of the active site. N-linked (GlcNAc...) asparagine glycans are attached at residues Asn316 and Asn354. Asn488 carries the GPI-anchor amidated asparagine lipid modification. Residues 489–512 (ASSDFIAHSLIIMLIVTPIIHYLC) constitute a propeptide, removed in mature form.

Belongs to the carbon-nitrogen hydrolase superfamily. BTD/VNN family. As to quaternary structure, monomer. Post-translationally, N-glycosylated. Detected in kidney (at protein level). Ubiquitous.

The protein resides in the cell membrane. It carries out the reaction (R)-pantetheine + H2O = cysteamine + (R)-pantothenate. Functionally, amidohydrolase that hydrolyzes specifically one of the carboamide linkages in D-pantetheine thus recycling pantothenic acid (vitamin B5) and releasing cysteamine. The polypeptide is Pantetheinase (Vnn1) (Mus musculus (Mouse)).